The primary structure comprises 418 residues: Cobalt-zinc-cadmium resistance protein CzcC (418 aa).

The first 22 residues, 1–22 (MRRLFLPLGLAVAFLSPNFAVA), serve as a signal peptide directing secretion.

The protein belongs to the outer membrane factor (OMF) (TC 1.B.17) family.

Its subcellular location is the cell outer membrane. CzcC protein appears to modify the specificity of the system, perhaps by acting on the CzcB protein. When the CzcC protein is added to CzcA and CzcB, the efflux system gains specificity for cadmium and cobalt. This Cupriavidus metallidurans (strain ATCC 43123 / DSM 2839 / NBRC 102507 / CH34) (Ralstonia metallidurans) protein is Cobalt-zinc-cadmium resistance protein CzcC (czcC).